The primary structure comprises 227 residues: Cytochrome c oxidase subunit 2 (227 aa).

Residues 1-14 (MAYPFQLGLQDATS) are Mitochondrial intermembrane-facing. A helical membrane pass occupies residues 15 to 45 (PIMEELTNFHDHTLMIVFLISSLVLYIISLM). The Mitochondrial matrix portion of the chain corresponds to 46–59 (LTTKLTHTSTMDAQ). The chain crosses the membrane as a helical span at residues 60–87 (EVETIWTILPAVILILIALPSLRILYMM). Residues 88-227 (DEINNPVLTV…YFENWSASMI (140 aa)) are Mitochondrial intermembrane-facing. Residues histidine 161, cysteine 196, glutamate 198, cysteine 200, histidine 204, and methionine 207 each coordinate Cu cation. Glutamate 198 contributes to the Mg(2+) binding site. At tyrosine 218 the chain carries Phosphotyrosine.

It belongs to the cytochrome c oxidase subunit 2 family. Component of the cytochrome c oxidase (complex IV, CIV), a multisubunit enzyme composed of 14 subunits. The complex is composed of a catalytic core of 3 subunits MT-CO1, MT-CO2 and MT-CO3, encoded in the mitochondrial DNA, and 11 supernumerary subunits COX4I, COX5A, COX5B, COX6A, COX6B, COX6C, COX7A, COX7B, COX7C, COX8 and NDUFA4, which are encoded in the nuclear genome. The complex exists as a monomer or a dimer and forms supercomplexes (SCs) in the inner mitochondrial membrane with NADH-ubiquinone oxidoreductase (complex I, CI) and ubiquinol-cytochrome c oxidoreductase (cytochrome b-c1 complex, complex III, CIII), resulting in different assemblies (supercomplex SCI(1)III(2)IV(1) and megacomplex MCI(2)III(2)IV(2)). Found in a complex with TMEM177, COA6, COX18, COX20, SCO1 and SCO2. Interacts with TMEM177 in a COX20-dependent manner. Interacts with COX20. Interacts with COX16. Cu cation serves as cofactor.

The protein localises to the mitochondrion inner membrane. It catalyses the reaction 4 Fe(II)-[cytochrome c] + O2 + 8 H(+)(in) = 4 Fe(III)-[cytochrome c] + 2 H2O + 4 H(+)(out). Component of the cytochrome c oxidase, the last enzyme in the mitochondrial electron transport chain which drives oxidative phosphorylation. The respiratory chain contains 3 multisubunit complexes succinate dehydrogenase (complex II, CII), ubiquinol-cytochrome c oxidoreductase (cytochrome b-c1 complex, complex III, CIII) and cytochrome c oxidase (complex IV, CIV), that cooperate to transfer electrons derived from NADH and succinate to molecular oxygen, creating an electrochemical gradient over the inner membrane that drives transmembrane transport and the ATP synthase. Cytochrome c oxidase is the component of the respiratory chain that catalyzes the reduction of oxygen to water. Electrons originating from reduced cytochrome c in the intermembrane space (IMS) are transferred via the dinuclear copper A center (CU(A)) of subunit 2 and heme A of subunit 1 to the active site in subunit 1, a binuclear center (BNC) formed by heme A3 and copper B (CU(B)). The BNC reduces molecular oxygen to 2 water molecules using 4 electrons from cytochrome c in the IMS and 4 protons from the mitochondrial matrix. This Dacnomys millardi (Millard's rat) protein is Cytochrome c oxidase subunit 2 (MT-CO2).